Consider the following 94-residue polypeptide: Co-chaperonin GroES (94 aa).

Belongs to the GroES chaperonin family. As to quaternary structure, heptamer of 7 subunits arranged in a ring. Interacts with the chaperonin GroEL.

It localises to the cytoplasm. Its function is as follows. Together with the chaperonin GroEL, plays an essential role in assisting protein folding. The GroEL-GroES system forms a nano-cage that allows encapsulation of the non-native substrate proteins and provides a physical environment optimized to promote and accelerate protein folding. GroES binds to the apical surface of the GroEL ring, thereby capping the opening of the GroEL channel. The sequence is that of Co-chaperonin GroES from Acetivibrio thermocellus (strain ATCC 27405 / DSM 1237 / JCM 9322 / NBRC 103400 / NCIMB 10682 / NRRL B-4536 / VPI 7372) (Clostridium thermocellum).